A 132-amino-acid polypeptide reads, in one-letter code: MALLLTTVIALTCLGGFASPSPVPRSTALKELIEELVNITQNQKAPLCNGSMVWSINLTAGVYCAALESLINVSGCSAIEKTQRMLNGFCPHKVSAGQFSSLRVRDTKIEVAQFVKDLLVHLKKLFREGRFN.

An N-terminal signal peptide occupies residues 1–18; the sequence is MALLLTTVIALTCLGGFA. N-linked (GlcNAc...) asparagine glycosylation is found at asparagine 38, asparagine 49, asparagine 57, and asparagine 72. 2 disulfides stabilise this stretch: cysteine 48-cysteine 76 and cysteine 64-cysteine 90.

Belongs to the IL-4/IL-13 family. Interacts with IL13RA2.

The protein resides in the secreted. Its function is as follows. Cytokine that plays important roles in allergic inflammation and immune response to parasite infection. Synergizes with IL2 in regulating interferon-gamma synthesis. Stimulates B-cell proliferation, and activation of eosinophils, basophils, and mast cells. Plays an important role in controlling IL33 activity by modulating the production of transmembrane and soluble forms of interleukin-1 receptor-like 1/IL1RL1. Displays the capacity to antagonize Th1-driven proinflammatory immune response and downregulates synthesis of many proinflammatory cytokines including IL1, IL6, IL10, IL12 and TNF-alpha through a mechanism that partially involves suppression of NF-kappa-B. Also functions on nonhematopoietic cells, including endothelial cells where it induces vascular cell adhesion protein 1/VCAM1, which is important in the recruitment of eosinophils. Exerts its biological effects through its receptors which comprises the IL4R chain and the IL13RA1 chain, to activate JAK1 and TYK2, leading to the activation of STAT6. Aside from IL13RA1, another receptor IL13RA2 acts as a high affinity decoy for IL13 and mediates internalization and depletion of extracellular IL13. This is Interleukin-13 (IL13) from Macaca mulatta (Rhesus macaque).